A 217-amino-acid polypeptide reads, in one-letter code: Ribonuclease HII (217 aa).

The region spanning 34–217 is the RNase H type-2 domain; the sequence is WPVAGTDEAG…RMSFRPLKRD (184 aa). Residues Asp-40, Glu-41, and Asp-131 each contribute to the a divalent metal cation site.

It belongs to the RNase HII family. Requires Mn(2+) as cofactor. Mg(2+) is required as a cofactor.

The protein resides in the cytoplasm. It catalyses the reaction Endonucleolytic cleavage to 5'-phosphomonoester.. Endonuclease that specifically degrades the RNA of RNA-DNA hybrids. This is Ribonuclease HII from Agrobacterium fabrum (strain C58 / ATCC 33970) (Agrobacterium tumefaciens (strain C58)).